Reading from the N-terminus, the 478-residue chain is uncharacterized protein (478 aa).

The first 19 residues, Met-1–Ala-19, serve as a signal peptide directing secretion. Over Ser-20–Gln-214 the chain is Lumenal. The chain crosses the membrane as a helical span at residues Ile-215–Ile-235. Residues Cys-236–Lys-240 lie on the Cytoplasmic side of the membrane. Residues Leu-241 to Val-261 traverse the membrane as a helical segment. The Lumenal segment spans residues Lys-262–Asp-289. A helical membrane pass occupies residues Gly-290–Ile-310. The Cytoplasmic segment spans residues Arg-311–Met-317. A helical transmembrane segment spans residues Val-318–Val-338. The Lumenal portion of the chain corresponds to Tyr-339–Val-356. The chain crosses the membrane as a helical span at residues Trp-357–Phe-377. The Cytoplasmic portion of the chain corresponds to Arg-378–Trp-391. Residues Asn-392 to Phe-412 form a helical membrane-spanning segment. Over Asp-413 to Glu-427 the chain is Lumenal. Residues Tyr-428–Tyr-448 form a helical membrane-spanning segment. Topologically, residues Ser-449 to Phe-478 are cytoplasmic.

The protein localises to the endoplasmic reticulum membrane. It localises to the golgi apparatus membrane. This is an uncharacterized protein from Schizosaccharomyces pombe (strain 972 / ATCC 24843) (Fission yeast).